We begin with the raw amino-acid sequence, 140 residues long: MQKKSSSKSHRATRGPSQRQLRAGELIRRALSDVVTRGTIQDPDLIERSFSVTEVRVSPDLRHATCFVAPLGKGDAAALAAALTRVRGYLRGQLSKEVTFKYMPDLTFEPDTSFDKAEQIDRLLHSPKVSQDLSPQDDEE.

The span at 1-13 (MQKKSSSKSHRAT) shows a compositional bias: basic residues. The tract at residues 1-22 (MQKKSSSKSHRATRGPSQRQLR) is disordered.

It belongs to the RbfA family. In terms of assembly, monomer. Binds 30S ribosomal subunits, but not 50S ribosomal subunits or 70S ribosomes.

It is found in the cytoplasm. Its function is as follows. One of several proteins that assist in the late maturation steps of the functional core of the 30S ribosomal subunit. Associates with free 30S ribosomal subunits (but not with 30S subunits that are part of 70S ribosomes or polysomes). Required for efficient processing of 16S rRNA. May interact with the 5'-terminal helix region of 16S rRNA. The chain is Ribosome-binding factor A from Parvibaculum lavamentivorans (strain DS-1 / DSM 13023 / NCIMB 13966).